The chain runs to 263 residues: uncharacterized protein (263 aa).

31–38 lines the ATP pocket; it reads GPTGSGKT.

Belongs to the CbbQ/NirQ/NorQ/GpvN family.

This is an uncharacterized protein from Staphylococcus epidermidis (strain ATCC 12228 / FDA PCI 1200).